The following is a 255-amino-acid chain: EEF1A lysine methyltransferase 4 (255 aa).

S-adenosyl-L-methionine contacts are provided by W26 and Y30. Y39 bears the Phosphotyrosine mark. S-adenosyl-L-methionine-binding positions include W41, G66, 88–89 (DY), 113–114 (DV), and K130. Residues 129 to 134 (EKGTLD) carry the Required for methyltransferase activity motif.

This sequence belongs to the methyltransferase superfamily.

It carries out the reaction L-lysyl-[protein] + S-adenosyl-L-methionine = N(6)-methyl-L-lysyl-[protein] + S-adenosyl-L-homocysteine + H(+). The catalysed reaction is N(6)-methyl-L-lysyl-[protein] + S-adenosyl-L-methionine = N(6),N(6)-dimethyl-L-lysyl-[protein] + S-adenosyl-L-homocysteine + H(+). The enzyme catalyses N(6),N(6)-dimethyl-L-lysyl-[protein] + S-adenosyl-L-methionine = N(6),N(6),N(6)-trimethyl-L-lysyl-[protein] + S-adenosyl-L-homocysteine + H(+). In terms of biological role, protein-lysine methyltransferase that efficiently catalyzes three successive methylations on 'Lys-36' in eukaryotic translation elongation factor 1 alpha (EEF1A1 or EEF1A2). The polypeptide is EEF1A lysine methyltransferase 4 (Homo sapiens (Human)).